The chain runs to 1442 residues: DNA polymerase III PolC-type (1442 aa).

Positions 426-582 (YVVFDVETTG…YDTEATAYIF (157 aa)) constitute an Exonuclease domain.

Belongs to the DNA polymerase type-C family. PolC subfamily.

The protein localises to the cytoplasm. The enzyme catalyses DNA(n) + a 2'-deoxyribonucleoside 5'-triphosphate = DNA(n+1) + diphosphate. Required for replicative DNA synthesis. This DNA polymerase also exhibits 3' to 5' exonuclease activity. The polypeptide is DNA polymerase III PolC-type (Staphylococcus epidermidis (strain ATCC 12228 / FDA PCI 1200)).